Here is an 800-residue protein sequence, read N- to C-terminus: Signaling protein YkoW (800 aa).

7 helical membrane-spanning segments follow: residues valine 5 to leucine 27, tryptophan 44 to alanine 66, glutamate 76 to valine 98, leucine 103 to isoleucine 125, isoleucine 135 to leucine 157, valine 178 to phenylalanine 200, and threonine 215 to serine 237. In terms of domain architecture, MHYT spans tyrosine 7 to histidine 201. Residues glutamine 255–alanine 319 enclose the PAS domain. Residues tyrosine 402–phenylalanine 536 enclose the GGDEF domain. Positions lysine 545 to proline 798 constitute an EAL domain.

The protein resides in the cell membrane. In terms of biological role, probable signaling protein whose physiological role is not yet known. The chain is Signaling protein YkoW (ykoW) from Bacillus subtilis (strain 168).